The sequence spans 208 residues: Guanylate kinase (208 aa).

In terms of domain architecture, Guanylate kinase-like spans 5 to 184 (GLLIVFSGPS…AAERVKCVIE (180 aa)). Residue 12 to 19 (GPSGVGKG) coordinates ATP.

The protein belongs to the guanylate kinase family.

It localises to the cytoplasm. It carries out the reaction GMP + ATP = GDP + ADP. Essential for recycling GMP and indirectly, cGMP. In Streptococcus pneumoniae serotype 4 (strain ATCC BAA-334 / TIGR4), this protein is Guanylate kinase.